Here is a 221-residue protein sequence, read N- to C-terminus: Ras-related protein Rab-27A (221 aa).

S2 carries the N-acetylserine modification. Position 2 is a phosphoserine (S2). G16–S24 contacts GTP. Positions F38 to F46 match the Effector region motif. GTP is bound by residues D74–Q78, N133–D136, and S163–A165. C123 and C188 are disulfide-bonded. S-geranylgeranyl cysteine attachment occurs at residues C219 and C221. Position 221 is a cysteine methyl ester (C221).

The protein belongs to the small GTPase superfamily. Rab family. Binds SYTL1, SLAC2B, MYRIP, SYTL3, SYTL4 and SYTL5. Interacts with RPH3A and RPH3A. Binds MLPH and SYTL2. Interacts with UNC13D. Does not interact with the BLOC-3 complex (heterodimer of HPS1 and HPS4). Interacts (GDP-bound form preferentially) with DENND10.

Its subcellular location is the membrane. The protein localises to the melanosome. The protein resides in the late endosome. It is found in the lysosome. It catalyses the reaction GTP + H2O = GDP + phosphate + H(+). With respect to regulation, regulated by guanine nucleotide exchange factors (GEFs) which promote the exchange of bound GDP for free GTP, GTPase activating proteins (GAPs) which increase the GTP hydrolysis activity, and GDP dissociation inhibitors which inhibit the dissociation of the nucleotide from the GTPase. Activated by GEFs such as DENND10. Its function is as follows. Small GTPase which cycles between active GTP-bound and inactive GDP-bound states. In its active state, binds to a variety of effector proteins to regulate homeostasis of late endocytic pathway, including endosomal positioning, maturation and secretion. Plays a role in cytotoxic granule exocytosis in lymphocytes. Required for both granule maturation and granule docking and priming at the immunologic synapse. The sequence is that of Ras-related protein Rab-27A (RAB27A) from Canis lupus familiaris (Dog).